The following is a 323-amino-acid chain: MIEFGNFYQLIAKNHLSHWLETLPAQIAAWQREQQHGLFKQWSNAVEFLPEMTPWRLDLLHSVTAESETPLSEGQLKRIDTLLRNLMPWRKGPFSLYGVDIDTEWRSDWKWDRVLPHLSDLTGRTILDVGCGSGYHLWRMIGAGAHLAVGIDPTQLFLCQFEAVRKLLGNDQRAHLLPLGIEQLPALKAFDTVFSMGVLYHRRSPLEHLWQLKDQLVNEGELVLETLVIDGDENTVLVPGDRYAQMRNVYFIPSAPALKKWLEKCGFIDVRIADVCVTTTEEQRRTEWMVTESLADFLDPNDRSKTVEGYPAPQRAVLIARKP.

Carboxy-S-adenosyl-L-methionine contacts are provided by residues Lys91, Trp105, Lys110, Gly130, 152 to 154 (DPT), 181 to 182 (IE), Met196, Tyr200, and Arg315.

This sequence belongs to the class I-like SAM-binding methyltransferase superfamily. CmoB family. In terms of assembly, homotetramer.

It catalyses the reaction carboxy-S-adenosyl-L-methionine + 5-hydroxyuridine(34) in tRNA = 5-carboxymethoxyuridine(34) in tRNA + S-adenosyl-L-homocysteine + H(+). In terms of biological role, catalyzes carboxymethyl transfer from carboxy-S-adenosyl-L-methionine (Cx-SAM) to 5-hydroxyuridine (ho5U) to form 5-carboxymethoxyuridine (cmo5U) at position 34 in tRNAs. The sequence is that of tRNA U34 carboxymethyltransferase from Salmonella paratyphi B (strain ATCC BAA-1250 / SPB7).